The following is a 190-amino-acid chain: UPF0301 protein Pfl01_5311 (190 aa).

The protein belongs to the UPF0301 (AlgH) family.

The chain is UPF0301 protein Pfl01_5311 from Pseudomonas fluorescens (strain Pf0-1).